Here is a 33-residue protein sequence, read N- to C-terminus: Non-specific lipid-transfer protein (33 aa).

The cysteines at positions 14 and 29 are disulfide-linked.

This sequence belongs to the plant LTP family. In terms of assembly, dimer.

Plant non-specific lipid-transfer proteins transfer phospholipids as well as galactolipids across membranes. May play a role in wax or cutin deposition in the cell walls of expanding epidermal cells and certain secretory tissues. Has antibacterial activity against Gram-positive bacteria S.aureus and S.epidermidis and blocks biofilm formation. In a mouse model, also protects against bacterial sepsis and has an anti-inflammatory effect. Exhibits antinociceptive activity upon oral or intraperitoneal application in mice. This Morinda citrifolia (Indian mulberry) protein is Non-specific lipid-transfer protein.